The chain runs to 261 residues: Cytochrome c oxidase subunit 3 (261 aa).

The Mitochondrial matrix portion of the chain corresponds to 1-15 (MAHQAHAYHMVDPSP). Residues 16–34 (WPLTGAIAALLLTSGTAVW) traverse the membrane as a helical segment. Over 35–40 (FHFHSL) the chain is Mitochondrial intermembrane. A helical transmembrane segment spans residues 41 to 66 (TLLTMGNILLLLTMYQWWRDIIREGT). Topologically, residues 67–72 (FQGHHT) are mitochondrial matrix. A helical membrane pass occupies residues 73-105 (PPVQKGLRYGMILFITSEVFFFLGFFWAFYHSS). Over 106–128 (LSPTPELGGCWPPTGIITLDPFE) the chain is Mitochondrial intermembrane. The chain crosses the membrane as a helical span at residues 129-152 (VPLLNTAVLLASGVTVTWAHHSIM). The Mitochondrial matrix segment spans residues 153-155 (EGE). Residues 156–183 (RKQTIQALTLTILLGFYFTFLQGMEYYE) traverse the membrane as a helical segment. Residues 184-190 (APFTIAD) are Mitochondrial intermembrane-facing. The helical transmembrane segment at 191-223 (GVYGSTFFVATGFHGLHVIIGSTFLAICLLRQI) threads the bilayer. The Mitochondrial matrix portion of the chain corresponds to 224-232 (QYHFTSEHH). Residues 233–256 (FGFEAAAWYWHFVDVVWLFLYVSI) traverse the membrane as a helical segment. Topologically, residues 257 to 261 (YWWGS) are mitochondrial intermembrane.

It belongs to the cytochrome c oxidase subunit 3 family. As to quaternary structure, component of the cytochrome c oxidase (complex IV, CIV), a multisubunit enzyme composed of 14 subunits. The complex is composed of a catalytic core of 3 subunits MT-CO1, MT-CO2 and MT-CO3, encoded in the mitochondrial DNA, and 11 supernumerary subunits COX4I, COX5A, COX5B, COX6A, COX6B, COX6C, COX7A, COX7B, COX7C, COX8 and NDUFA4, which are encoded in the nuclear genome. The complex exists as a monomer or a dimer and forms supercomplexes (SCs) in the inner mitochondrial membrane with NADH-ubiquinone oxidoreductase (complex I, CI) and ubiquinol-cytochrome c oxidoreductase (cytochrome b-c1 complex, complex III, CIII), resulting in different assemblies (supercomplex SCI(1)III(2)IV(1) and megacomplex MCI(2)III(2)IV(2)).

The protein localises to the mitochondrion inner membrane. It carries out the reaction 4 Fe(II)-[cytochrome c] + O2 + 8 H(+)(in) = 4 Fe(III)-[cytochrome c] + 2 H2O + 4 H(+)(out). Its function is as follows. Component of the cytochrome c oxidase, the last enzyme in the mitochondrial electron transport chain which drives oxidative phosphorylation. The respiratory chain contains 3 multisubunit complexes succinate dehydrogenase (complex II, CII), ubiquinol-cytochrome c oxidoreductase (cytochrome b-c1 complex, complex III, CIII) and cytochrome c oxidase (complex IV, CIV), that cooperate to transfer electrons derived from NADH and succinate to molecular oxygen, creating an electrochemical gradient over the inner membrane that drives transmembrane transport and the ATP synthase. Cytochrome c oxidase is the component of the respiratory chain that catalyzes the reduction of oxygen to water. Electrons originating from reduced cytochrome c in the intermembrane space (IMS) are transferred via the dinuclear copper A center (CU(A)) of subunit 2 and heme A of subunit 1 to the active site in subunit 1, a binuclear center (BNC) formed by heme A3 and copper B (CU(B)). The BNC reduces molecular oxygen to 2 water molecules using 4 electrons from cytochrome c in the IMS and 4 protons from the mitochondrial matrix. The chain is Cytochrome c oxidase subunit 3 (mt-co3) from Salmo salar (Atlantic salmon).